Here is a 178-residue protein sequence, read N- to C-terminus: Ribosome maturation factor RimP (178 aa).

This sequence belongs to the RimP family.

It is found in the cytoplasm. Functionally, required for maturation of 30S ribosomal subunits. The sequence is that of Ribosome maturation factor RimP from Mycobacterium avium (strain 104).